The following is a 2175-amino-acid chain: Genome polyprotein (2175 aa).

Gly-2 carries the N-myristoyl glycine; by host lipid modification. Residues 2–1485 are Cytoplasmic-facing; sequence GAQLSRNTAG…NVNRALAVIQ (1484 aa). 2 amphipathic alpha-helix regions span residues 557–574 and 560–581; these read ILQN…DKQV and NDPG…LVAG. Residues His-861 and Asp-879 each act as for protease 2A activity in the active site. Positions 896 and 898 each coordinate Zn(2+). Residue Cys-950 is the For protease 2A activity of the active site. The Zn(2+) site is built by Cys-956 and His-958. A membrane-binding region spans residues 1090 to 1162; that stretch reads SDNWMKKFTE…EHSSASQERQ (73 aa). Residues 1090 to 1228 form an oligomerization region; the sequence is SDNWMKKFTE…SPGTGQSLAT (139 aa). Residues 1111 to 1115 form an RNA-binding region; the sequence is AAKIS. Positions 1194-1352 constitute an SF3 helicase domain; it reads EKRVLGAMQF…YKRDGVTLDV (159 aa). 3 residues coordinate Zn(2+): Cys-1359, Cys-1370, and Cys-1375. The C4-type; degenerate zinc-finger motif lies at 1359–1375; it reads CEDCSPANFKKCMPLIC. The segment at 1403-1410 is RNA-binding; it reads ESNRRYNI. An oligomerization region spans residues 1414 to 1419; that stretch reads LEALFQ. An intramembrane segment occupies 1486–1501; that stretch reads SVSLIAAVAGTIYIVY. Topologically, residues 1502–2175 are cytoplasmic; that stretch reads RLFSGMQGPY…ALERKWYDSF (674 aa). Position 1511 is an O-(5'-phospho-RNA)-tyrosine (Tyr-1511). Residues 1532 to 1710 enclose the Peptidase C3 domain; the sequence is GPLFDFGVSL…FAASLLRRYF (179 aa). Residues His-1571, Glu-1602, and Cys-1678 each act as for protease 3C activity in the active site. Positions 1941–2056 constitute a RdRp catalytic domain; that stretch reads GELFGFDYTA…SYPYEIDASL (116 aa). 2 residues coordinate Mg(2+): Asp-1947 and Asp-2042.

Belongs to the picornaviruses polyprotein family. As to quaternary structure, interacts with capsid protein VP1 and capsid protein VP3 to form heterotrimeric protomers. In terms of assembly, interacts with capsid protein VP0, and capsid protein VP3 to form heterotrimeric protomers. Five protomers subsequently associate to form pentamers which serve as building blocks for the capsid. Interacts with capsid protein VP2, capsid protein VP3 and capsid protein VP4 following cleavage of capsid protein VP0. Interacts with capsid protein VP1 and capsid protein VP3 in the mature capsid. As to quaternary structure, interacts with capsid protein VP0 and capsid protein VP1 to form heterotrimeric protomers. Five protomers subsequently associate to form pentamers which serve as building blocks for the capsid. Interacts with capsid protein VP4 in the mature capsid. Interacts with protein 2C; this interaction may be important for virion morphogenesis. In terms of assembly, interacts with capsid protein VP1 and capsid protein VP3. Homodimer. As to quaternary structure, homohexamer; forms a hexameric ring structure with 6-fold symmetry characteristic of AAA+ ATPases. Interacts (via N-terminus) with host RTN3 (via reticulon domain); this interaction is important for viral replication. Interacts with capsid protein VP3; this interaction may be important for virion morphogenesis. In terms of assembly, interacts with protein 3CD. Homodimer. Interacts with host GBF1. Interacts (via GOLD domain) with host ACBD3 (via GOLD domain); this interaction allows the formation of a viral protein 3A/ACBD3 heterotetramer with a 2:2 stoichiometry, which will stimulate the recruitment of host PI4KB in order to synthesize PI4P at the viral RNA replication sites. As to quaternary structure, interacts with RNA-directed RNA polymerase. In terms of assembly, interacts with protein 3AB and with RNA-directed RNA polymerase. Interacts with Viral protein genome-linked and with protein 3CD. Mg(2+) serves as cofactor. Specific enzymatic cleavages in vivo by the viral proteases yield processing intermediates and the mature proteins. Post-translationally, myristoylation is required for the formation of pentamers during virus assembly. Further assembly of 12 pentamers and a molecule of genomic RNA generates the provirion. In terms of processing, during virion maturation, immature virions are rendered infectious following cleavage of VP0 into VP4 and VP2. This maturation seems to be an autocatalytic event triggered by the presence of RNA in the capsid and it is followed by a conformational change infectious virion. Myristoylation is required during RNA encapsidation and formation of the mature virus particle. Post-translationally, VPg is uridylylated by the polymerase into VPg-pUpU. This acts as a nucleotide-peptide primer for the genomic RNA replication.

The protein resides in the virion. The protein localises to the host cytoplasm. It localises to the host cytoplasmic vesicle membrane. It is found in the host nucleus. It catalyses the reaction a ribonucleoside 5'-triphosphate + H2O = a ribonucleoside 5'-diphosphate + phosphate + H(+). It carries out the reaction Selective cleavage of Tyr-|-Gly bond in the picornavirus polyprotein.. The catalysed reaction is RNA(n) + a ribonucleoside 5'-triphosphate = RNA(n+1) + diphosphate. The enzyme catalyses Selective cleavage of Gln-|-Gly bond in the poliovirus polyprotein. In other picornavirus reactions Glu may be substituted for Gln, and Ser or Thr for Gly.. With respect to regulation, replication or transcription is subject to high level of random mutations by the nucleotide analog ribavirin. Forms an icosahedral capsid of pseudo T=3 symmetry with capsid proteins VP2 and VP3. The capsid is 300 Angstroms in diameter, composed of 60 copies of each capsid protein and enclosing the viral positive strand RNA genome. Capsid protein VP1 mainly forms the vertices of the capsid. Capsid protein VP1 interacts with host cell receptor to provide virion attachment to target host cells. This attachment induces virion internalization. Tyrosine kinases are probably involved in the entry process. After binding to its receptor, the capsid undergoes conformational changes. Capsid protein VP1 N-terminus (that contains an amphipathic alpha-helix) and capsid protein VP4 are externalized. Together, they shape a pore in the host membrane through which viral genome is translocated to host cell cytoplasm. Its function is as follows. Forms an icosahedral capsid of pseudo T=3 symmetry with capsid proteins VP2 and VP3. The capsid is 300 Angstroms in diameter, composed of 60 copies of each capsid protein and enclosing the viral positive strand RNA genome. Functionally, lies on the inner surface of the capsid shell. After binding to the host receptor, the capsid undergoes conformational changes. Capsid protein VP4 is released, Capsid protein VP1 N-terminus is externalized, and together, they shape a pore in the host membrane through which the viral genome is translocated into the host cell cytoplasm. In terms of biological role, component of immature procapsids, which is cleaved into capsid proteins VP4 and VP2 after maturation. Allows the capsid to remain inactive before the maturation step. Cysteine protease that cleaves viral polyprotein and specific host proteins. It is responsible for the autocatalytic cleavage between the P1 and P2 regions, which is the first cleavage occurring in the polyprotein. Also cleaves the host translation initiation factor EIF4G1, in order to shut down the capped cellular mRNA translation. Inhibits the host nucleus-cytoplasm protein and RNA trafficking by cleaving host members of the nuclear pores. Counteracts stress granule formation probably by antagonizing its assembly or promoting its dissassembly. Its function is as follows. Plays an essential role in the virus replication cycle by acting as a viroporin. Creates a pore in the host endoplasmic reticulum and as a consequence releases Ca2+ in the cytoplasm of infected cell. In turn, high levels of cytoplasmic calcium may trigger membrane trafficking and transport of viral ER-associated proteins to viroplasms, sites of viral genome replication. Functionally, induces and associates with structural rearrangements of intracellular membranes. Displays RNA-binding, nucleotide binding and NTPase activities. May play a role in virion morphogenesis and viral RNA encapsidation by interacting with the capsid protein VP3. In terms of biological role, localizes the viral replication complex to the surface of membranous vesicles. Together with protein 3CD binds the Cis-Active RNA Element (CRE) which is involved in RNA synthesis initiation. Acts as a cofactor to stimulate the activity of 3D polymerase, maybe through a nucleid acid chaperone activity. Localizes the viral replication complex to the surface of membranous vesicles. It inhibits host cell endoplasmic reticulum-to-Golgi apparatus transport and causes the disassembly of the Golgi complex, possibly through GBF1 interaction. This would result in depletion of MHC, trail receptors and IFN receptors at the host cell surface. Plays an essential role in viral RNA replication by recruiting ACBD3 and PI4KB at the viral replication sites, thereby allowing the formation of the rearranged membranous structures where viral replication takes place. Its function is as follows. Acts as a primer for viral RNA replication and remains covalently bound to viral genomic RNA. VPg is uridylylated prior to priming replication into VPg-pUpU. The oriI viral genomic sequence may act as a template for this. The VPg-pUpU is then used as primer on the genomic RNA poly(A) by the RNA-dependent RNA polymerase to replicate the viral genome. During genome replication, the VPg-RNA linkage is removed by the host TDP2, thereby accelerating replication. During the late stage of the replication cycle, host TDP2 is excluded from sites of viral RNA synthesis and encapsidation, allowing for the generation of progeny virions. Functionally, involved in the viral replication complex and viral polypeptide maturation. It exhibits protease activity with a specificity and catalytic efficiency that is different from protease 3C. Protein 3CD lacks polymerase activity. Protein 3CD binds to the 5'UTR of the viral genome. In terms of biological role, replicates the viral genomic RNA on the surface of intracellular membranes. May form linear arrays of subunits that propagate along a strong head-to-tail interaction called interface-I. Covalently attaches UMP to a tyrosine of VPg, which is used to prime RNA synthesis. The positive stranded RNA genome is first replicated at virus induced membranous vesicles, creating a dsRNA genomic replication form. This dsRNA is then used as template to synthesize positive stranded RNA genomes. ss(+)RNA genomes are either translated, replicated or encapsidated. Major viral protease that mediates proteolytic processing of the polyprotein. Cleaves host EIF5B, contributing to host translation shutoff. Also cleaves host PABPC1, contributing to host translation shutoff. Cleaves host NLRP1, triggers host N-glycine-mediated degradation of the autoinhibitory NLRP1 N-terminal fragment. The chain is Genome polyprotein from Bos taurus (Bovine).